A 75-amino-acid chain; its full sequence is UPF0352 protein ESA_01049 (75 aa).

This sequence belongs to the UPF0352 family.

The sequence is that of UPF0352 protein ESA_01049 from Cronobacter sakazakii (strain ATCC BAA-894) (Enterobacter sakazakii).